Here is a 246-residue protein sequence, read N- to C-terminus: DNA repair protein RecO (246 aa).

Belongs to the RecO family.

Its function is as follows. Involved in DNA repair and RecF pathway recombination. The polypeptide is DNA repair protein RecO (Pelobacter propionicus (strain DSM 2379 / NBRC 103807 / OttBd1)).